The chain runs to 328 residues: GTP 3',8-cyclase (328 aa).

The region spanning 9 to 229 (GFGRDVRYLR…DNGLNTGGPA (221 aa)) is the Radical SAM core domain. Arginine 18 serves as a coordination point for GTP. Residues cysteine 25 and cysteine 29 each contribute to the [4Fe-4S] cluster site. Residue tyrosine 31 coordinates S-adenosyl-L-methionine. Residue cysteine 32 coordinates [4Fe-4S] cluster. Arginine 60 contacts GTP. Glycine 64 provides a ligand contact to S-adenosyl-L-methionine. A GTP-binding site is contributed by threonine 94. An S-adenosyl-L-methionine-binding site is contributed by serine 118. Lysine 154 contacts GTP. Methionine 188 contacts S-adenosyl-L-methionine. The [4Fe-4S] cluster site is built by cysteine 252 and cysteine 255. 257–259 (RVR) provides a ligand contact to GTP. Cysteine 269 contacts [4Fe-4S] cluster.

It belongs to the radical SAM superfamily. MoaA family. Monomer and homodimer. The cofactor is [4Fe-4S] cluster.

The catalysed reaction is GTP + AH2 + S-adenosyl-L-methionine = (8S)-3',8-cyclo-7,8-dihydroguanosine 5'-triphosphate + 5'-deoxyadenosine + L-methionine + A + H(+). It participates in cofactor biosynthesis; molybdopterin biosynthesis. Functionally, catalyzes the cyclization of GTP to (8S)-3',8-cyclo-7,8-dihydroguanosine 5'-triphosphate. The polypeptide is GTP 3',8-cyclase (Rhodobacter capsulatus (Rhodopseudomonas capsulata)).